Here is a 276-residue protein sequence, read N- to C-terminus: Formamidopyrimidine-DNA glycosylase (276 aa).

The active-site Schiff-base intermediate with DNA is the P2. Catalysis depends on E3, which acts as the Proton donor. Catalysis depends on K59, which acts as the Proton donor; for beta-elimination activity. H92, R111, and K155 together coordinate DNA. The segment at 239–273 (AVYGQTGAPCPRCGTAIEKIKVGGRGTHFCPTCQQ) adopts an FPG-type zinc-finger fold. The active-site Proton donor; for delta-elimination activity is the R263.

The protein belongs to the FPG family. Monomer. Requires Zn(2+) as cofactor.

It carries out the reaction Hydrolysis of DNA containing ring-opened 7-methylguanine residues, releasing 2,6-diamino-4-hydroxy-5-(N-methyl)formamidopyrimidine.. The catalysed reaction is 2'-deoxyribonucleotide-(2'-deoxyribose 5'-phosphate)-2'-deoxyribonucleotide-DNA = a 3'-end 2'-deoxyribonucleotide-(2,3-dehydro-2,3-deoxyribose 5'-phosphate)-DNA + a 5'-end 5'-phospho-2'-deoxyribonucleoside-DNA + H(+). In terms of biological role, involved in base excision repair of DNA damaged by oxidation or by mutagenic agents. Acts as a DNA glycosylase that recognizes and removes damaged bases. Has a preference for oxidized purines, such as 7,8-dihydro-8-oxoguanine (8-oxoG). Has AP (apurinic/apyrimidinic) lyase activity and introduces nicks in the DNA strand. Cleaves the DNA backbone by beta-delta elimination to generate a single-strand break at the site of the removed base with both 3'- and 5'-phosphates. This chain is Formamidopyrimidine-DNA glycosylase, found in Exiguobacterium sibiricum (strain DSM 17290 / CCUG 55495 / CIP 109462 / JCM 13490 / 255-15).